The sequence spans 155 residues: RxLR effector protein 24 (155 aa).

The first 21 residues, 1 to 21, serve as a signal peptide directing secretion; it reads MRLLIWVLFVTLVTFVSNTTA. The short motif at 52–78 is the RxLR-dEER element; sequence RFLRTESKNDLKSDADTNGIDIEDEER. Residues 105–155 form an RABA-binding domain region; sequence EKAFQRMNQKGETPTTLAKRLDIGKTAEKRFEKTYEKYTAWWINHHTNAGT.

This sequence belongs to the RxLR effector family. In terms of assembly, interacts with Arabidopsis thaliana RABA GTPases including RABA1a, RABA1b, RABA1c, RABA1d, RABA1f, RABA2a, RABA2c, RABA2d, RABA4a, RABA4b and RABA4c.

Its subcellular location is the secreted. It is found in the host cell membrane. The protein resides in the host endomembrane system. Effector protein that contributes to pathogen virulence. Targets members of the RABA GTPases subfamily to inhibit vesicular secretion, leading to an accumulation of secretory proteins in the endoplasmic reticulum. The sequence is that of RxLR effector protein 24 from Phytophthora brassicae.